The following is a 1515-amino-acid chain: Adhesion G protein-coupled receptor L1 (1515 aa).

A signal peptide spans 1–24; it reads MARLAAALWSLCVTTVLVTSATQG. The Extracellular portion of the chain corresponds to 25–857; it reads LSRAGLPFGL…EIYQGRINEL (833 aa). Positions 40–129 constitute an SUEL-type lectin domain; it reads ACEGYPIELR…KYLEVQYDCV (90 aa). Disulfide bonds link Cys-41-Cys-71, Cys-50-Cys-128, Cys-83-Cys-115, Cys-96-Cys-102, and Cys-140-Cys-322. An alpha-L-rhamnose-binding site is contributed by Glu-42. A glycan (N-linked (GlcNAc...) asparagine) is linked at Asn-98. 117 to 120 serves as a coordination point for alpha-L-rhamnose; sequence GTYK. In terms of domain architecture, Olfactomedin-like spans 139–398; that stretch reads VCPGTLQKVL…VVRYSLEFGP (260 aa). Residues 400 to 468 form a disordered region; the sequence is DPSAGPATSP…APAPSTRRPP (69 aa). Over residues 405 to 441 the composition is skewed to low complexity; that stretch reads PATSPPLSTTTTARPTPLTSTASPAATTPLRRAPLTT. Residues 453 to 468 are compositionally biased toward pro residues; it reads DLPPATAPAPSTRRPP. 2 disulfide bridges follow: Cys-480–Cys-515 and Cys-503–Cys-532. 6 N-linked (GlcNAc...) asparagine glycosylation sites follow: Asn-531, Asn-640, Asn-741, Asn-800, Asn-805, and Asn-826. The GAIN-B domain maps to 669 to 850; sequence PARFLAAKQN…AVLMAHREIY (182 aa). 2 disulfide bridges follow: Cys-801-Cys-832 and Cys-820-Cys-834. Residues 801 to 850 are GPS; it reads CSFWNYSERSMLGYWSTQGCRLVESNKTHTTCACSHLTNFAVLMAHREIY. The chain crosses the membrane as a helical span at residues 858 to 878; the sequence is LLSVITWVGIVISLVCLAICI. Residues 879–892 lie on the Cytoplasmic side of the membrane; the sequence is STFCFLRGLQTDRN. Residues 893–913 traverse the membrane as a helical segment; the sequence is TIHKNLCINLFLAELLFLVGI. Residues 914 to 919 lie on the Extracellular side of the membrane; sequence DKTQYE. A helical transmembrane segment spans residues 920–940; sequence VACPIFAGLLHYFFLAAFSWL. The Cytoplasmic portion of the chain corresponds to 941 to 964; that stretch reads CLEGVHLYLLLVEVFESEYSRTKY. The helical transmembrane segment at 965–985 threads the bilayer; sequence YYLGGYCFPALVVGIAAAIDY. The Extracellular portion of the chain corresponds to 986–1001; that stretch reads RSYGTEKACWLRVDNY. Residues 1002 to 1022 traverse the membrane as a helical segment; that stretch reads FIWSFIGPVSFVIVVNLVFLM. Over 1023-1049 the chain is Cytoplasmic; sequence VTLHKMIRSSSVLKPDSSRLDNIKSWA. The helical transmembrane segment at 1050–1070 threads the bilayer; sequence LGAIALLFLLGLTWAFGLLFI. Residues 1071–1074 are Extracellular-facing; it reads NKES. The helical transmembrane segment at 1075–1095 threads the bilayer; that stretch reads VVMAYLFTTFNAFQGVFIFVF. The Cytoplasmic portion of the chain corresponds to 1096-1515; the sequence is HCALQKKVHK…DGQMQLVTSL (420 aa). The disordered stretch occupies residues 1144–1184; the sequence is TQVPGQGRHIHQVSLGPRGRSALPESQKDPGGQSGPGDPLT. Omega-N-methylarginine is present on Arg-1237. Ser-1263 is subject to Phosphoserine. 4 disordered regions span residues 1291-1316, 1337-1369, 1401-1470, and 1492-1515; these read FNNSYSLRSGDFPPGDGGPEPPRGRN, RGASGGAKGPPPEPPVPPVPGVSEDEAGGPGGA, ESES…SRPP, and YLAAPSLEGPGPDGDGQMQLVTSL. Composition is skewed to pro residues over residues 1345-1356 and 1449-1461; these read GPPPEPPVPPVP and ALPPPPPAPPGPP. A phosphoserine mark is found at Ser-1497 and Ser-1514.

Belongs to the G-protein coupled receptor 2 family. Adhesion G-protein coupled receptor (ADGR) subfamily. In terms of assembly, forms a heterodimer, consisting of a large extracellular region (p120) non-covalently linked to a seven-transmembrane moiety (p85). Interacts with syntaxin and with proteins of the SHANK family via the PDZ domain. Isoform 2 interacts with TENM2. Interacts (via extracellular domain) with FLRT1, FLRT2 and FLRT3 (via extracellular domain). In terms of processing, autoproteolytically cleaved into 2 subunits, an extracellular subunit and a seven-transmembrane subunit. This proteolytic processing takes place early in the biosynthetic pathway, either in the endoplasmic reticulum or in the early compartment of the Golgi apparatus. In terms of tissue distribution, expressed in the brain (at protein level). Brain specific distribution but low levels are also detected in most tissues.

It localises to the cell membrane. It is found in the cell projection. The protein localises to the axon. Its subcellular location is the growth cone. The protein resides in the synapse. It localises to the presynaptic cell membrane. It is found in the synaptosome. In terms of biological role, calcium-independent receptor of high affinity for alpha-latrotoxin, an excitatory neurotoxin present in black widow spider venom which triggers massive exocytosis from neurons and neuroendocrine cells. Receptor probably implicated in the regulation of exocytosis. Functionally, receptor for TENM2 that mediates heterophilic synaptic cell-cell contact and postsynaptic specialization. In Rattus norvegicus (Rat), this protein is Adhesion G protein-coupled receptor L1.